Reading from the N-terminus, the 706-residue chain is MVNFSNKLTKDQIPGWEEYYFNYKMLKGRVNEYTEQTKEGTQYRRRVLKDFSKLLDDEIEKIVLFMIEQQGLIAARLEDLGKRRARLQDIPLLQEITELREDYRSVGLDLVTLLKFVELNANAVRKILKKFDERLGYKFTDYYVRSRSNHPYSQLQQVFRHVGIGAVVGALSRNLSDLEERQGSYLNIYDQHPLAIPKDPIIDLITATADKLTNSTNFLRFLGQHALIAQADSTAGTEDEQHVGEDKYHLMSLVLNLANTFLYMVNTYIVVPTADGYATSLGAAATACGAVIGSMAVAQVFSSVYFSAWSNRSYFRPLLFSSVVLLLGNVMYAMAFDLGSLTILLLGRVLCGMGSARAVNRRYISDCVPPRIRMQASAAFVSASALGMACGPALAGLLQTNFSLYGLTINQITLPGWIMAFGWLVYLIWLWISFQEPDLGPDAKDFYEGSSSSTSTRYMEQEKMEQGFTEHLLPSEQDEEDDNGDEEHNETLSSSTTTLRPASSVASAYTLLTPSVKVQLLIYFMLKYAMEILLAESSVVTGYYFGWDIGTVSVFLAVLGLSVLPVNAIVGTYISNMFEDRQILVASEMALLAGVMLSFKLTVEYTAAQYVCSAVLTFVSAEVVEGVNLSLLSRVMSARLSRGTYNGGLLSTEAGTVARVVADGTITAAGLLAGEGRLLNATLLPALLVCVASIAATLSTYNSLFY.

The SPX domain maps to 2 to 145; the sequence is VNFSNKLTKD…GYKFTDYYVR (144 aa). Helical transmembrane passes span 251 to 271, 281 to 301, 318 to 338, 340 to 359, 378 to 398, and 414 to 434; these read MSLV…YIVV, LGAA…AQVF, LLFS…AFDL, SLTI…ARAV, AAFV…AGLL, and LPGW…WISF. A disordered region spans residues 475–498; it reads SEQDEEDDNGDEEHNETLSSSTTT. Positions 476 to 488 are enriched in acidic residues; the sequence is EQDEEDDNGDEEH. The next 5 membrane-spanning stretches (helical) occupy residues 520–540, 554–574, 583–603, 611–631, and 678–698; these read LLIY…SSVV, VFLA…GTYI, ILVA…KLTV, VCSA…NLSL, and LLNA…AATL.

Belongs to the major facilitator superfamily.

It localises to the membrane. The polypeptide is SPX domain-containing membrane protein OsI_32082 (Oryza sativa subsp. indica (Rice)).